We begin with the raw amino-acid sequence, 909 residues long: E3 ubiquitin-protein ligase HACE1 (909 aa).

The segment at 1–21 (MERAMEQLNRLTRSLRRARTV) is N-terminal helix important for homodimerization. 7 ANK repeats span residues 23-55 (LPED…NSKF), 64-93 (VKRS…NPNY), 97-126 (SGCT…DVNI), 130-159 (EGLT…DVDV), 163-192 (MGQT…DINR), 196-226 (SGAT…YLPD), and 228-253 (NGVT…QYHP). The segment at 398–433 (QDQDAASIPPFEPPGPGSYENLSTGTRESKPDALAG) is disordered. The HECT domain occupies 574–909 (NCAKLKQGIA…HCGSYGYTMA (336 aa)). Residue Cys876 is the Glycyl thioester intermediate of the active site.

In terms of assembly, homodimer. The homodimer is autoinhibited and stabilized by its N-terminal helix. Interacts with RAB1 (RAB1A, RAB1B or RAB1C), RAB4 (RAB4A or RAB4B) and RAB11 (RAB11A or RAB11B); in a GTP-dependent manner. Interacts with the 26S proteasomal complex through the 20S core proteasomal subunit. Interacts with RARB. Post-translationally, autoubiquitinated. Expressed in multiple tissues including heart, brain and kidney.

It is found in the golgi apparatus. Its subcellular location is the golgi stack membrane. The protein resides in the cytoplasm. It localises to the endoplasmic reticulum. The enzyme catalyses S-ubiquitinyl-[E2 ubiquitin-conjugating enzyme]-L-cysteine + [acceptor protein]-L-lysine = [E2 ubiquitin-conjugating enzyme]-L-cysteine + N(6)-ubiquitinyl-[acceptor protein]-L-lysine.. The protein operates within protein modification; protein ubiquitination. Its activity is regulated as follows. Sterically autoinhibited in its dimeric state. In terms of biological role, E3 ubiquitin-protein ligase involved in Golgi membrane fusion and regulation of small GTPases. Acts as a regulator of Golgi membrane dynamics during the cell cycle: recruited to Golgi membrane by Rab proteins and regulates postmitotic Golgi membrane fusion. Acts by mediating ubiquitination during mitotic Golgi disassembly, ubiquitination serving as a signal for Golgi reassembly later, after cell division. Specifically binds GTP-bound RAC1, mediating ubiquitination and subsequent degradation of active RAC1, thereby playing a role in host defense against pathogens. May also act as a transcription regulator via its interaction with RARB. This chain is E3 ubiquitin-protein ligase HACE1 (HACE1), found in Homo sapiens (Human).